A 319-amino-acid polypeptide reads, in one-letter code: Vomeronasal type-1 receptor 51 (319 aa).

The Extracellular segment spans residues M1–H31. A helical membrane pass occupies residues I32–I52. Topologically, residues L53–D65 are cytoplasmic. A helical membrane pass occupies residues L66 to A86. Residues T87–R109 lie on the Extracellular side of the membrane. C101 and C188 are disulfide-bonded. A helical transmembrane segment spans residues V110–L130. The Cytoplasmic portion of the chain corresponds to S131–C150. Residues A151–I171 traverse the membrane as a helical segment. Over A172–T203 the chain is Extracellular. An N-linked (GlcNAc...) asparagine glycan is attached at N175. The chain crosses the membrane as a helical span at residues L204–V224. At A225–Q254 the chain is on the cytoplasmic side. Residues T255–C275 form a helical membrane-spanning segment. The Extracellular segment spans residues S276–T285. A helical membrane pass occupies residues S286–M306. Over S307–V319 the chain is Cytoplasmic.

This sequence belongs to the G-protein coupled receptor 1 family. As to expression, expressed in a subset of sensory neurons located in the apical layer of the vomeronasal organ.

Its subcellular location is the cell membrane. In terms of biological role, putative pheromone receptor implicated in the regulation of social as well as reproductive behavior. This is Vomeronasal type-1 receptor 51 (Vmn1r51) from Mus musculus (Mouse).